Consider the following 334-residue polypeptide: UstYa family oxidase aprY (334 aa).

Residues 55–75 (IWILLTITNLIILGITVSMIV) traverse the membrane as a helical segment. Asn112 is a glycosylation site (N-linked (GlcNAc...) asparagine). An HXXHC 1 motif is present at residues 185-189 (HQIHC). Asn214 carries an N-linked (GlcNAc...) asparagine glycan. The HXXHC 2 motif lies at 223 to 227 (HLGHC). The span at 306–318 (SELGEKLGKHQKQ) shows a compositional bias: basic and acidic residues. The segment at 306-334 (SELGEKLGKHQKQEGVLGQAGHQHTKRHE) is disordered.

This sequence belongs to the ustYa family.

Its subcellular location is the membrane. It functions in the pathway secondary metabolite biosynthesis. Functionally, ustYa family oxidase; part of the gene cluster that mediates the biosynthesis of the asperipin-2a, a bicyclic peptide that possesses two macrocyclic ether rings consisting of 14- and 17-membered paracyclophans. Within the pathway, aprY is responsible for the synthesis of the bicyclic structure of asperipin-2a. The pathway starts with the processing of the precursor aprA by kexin proteases to produce 11 identical copies of the hexapeptide Phe-Tyr-Tyr-Thr-Gly-Tyr. Macrocyclization of asperipin-2a may accompany an alpha-hydroxylation-dehydration sequence to give an imine, which is readily hydrolyzed to yield putative ketone intermediate. The reductase aprR may be required for the final reduction to yield asperipin-2a. The polypeptide is UstYa family oxidase aprY (Aspergillus flavus (strain ATCC 200026 / FGSC A1120 / IAM 13836 / NRRL 3357 / JCM 12722 / SRRC 167)).